The following is a 67-amino-acid chain: MPKLKTKSAVKKRFKFTATGKVIASQAGKKHFMRRRTKAQIRNLRGTTILCPQDGHNIKKYFLPYGI.

Belongs to the bacterial ribosomal protein bL35 family.

The protein is Large ribosomal subunit protein bL35 of Rickettsia prowazekii (strain Madrid E).